The primary structure comprises 406 residues: L-carnitine CoA-transferase (406 aa).

CoA contacts are provided by Lys98 and Arg105. Asp170 functions as the Nucleophile in the catalytic mechanism.

This sequence belongs to the CoA-transferase III family. CaiB subfamily. As to quaternary structure, homodimer.

It is found in the cytoplasm. It carries out the reaction crotonobetainyl-CoA + (R)-carnitine = crotonobetaine + (R)-carnitinyl-CoA. The enzyme catalyses 4-(trimethylamino)butanoyl-CoA + (R)-carnitine = (R)-carnitinyl-CoA + 4-(trimethylamino)butanoate. The protein operates within amine and polyamine metabolism; carnitine metabolism. In terms of biological role, catalyzes the reversible transfer of the CoA moiety from gamma-butyrobetainyl-CoA to L-carnitine to generate L-carnitinyl-CoA and gamma-butyrobetaine. Is also able to catalyze the reversible transfer of the CoA moiety from gamma-butyrobetainyl-CoA or L-carnitinyl-CoA to crotonobetaine to generate crotonobetainyl-CoA. In Proteus mirabilis (strain HI4320), this protein is L-carnitine CoA-transferase.